The chain runs to 354 residues: Soluble interferon alpha/beta receptor OPG204 (354 aa).

The first 22 residues, 1–22 (MMKMTMKMMVHIYFVSLLLLLF), serve as a signal peptide directing secretion. Ig-like C2-type domains follow at residues 68–150 (IGEP…RSHV) and 158–240 (PEIY…IVVS). Disulfide bonds link Cys-76-Cys-132 and Cys-175-Cys-224. N-linked (GlcNAc...) asparagine; by host glycosylation is found at Asn-120, Asn-124, Asn-185, Asn-272, and Asn-324. Positions 249–348 (PSQDHRFKLI…HNYYFEKTLT (100 aa)) constitute an Ig-like V-type domain. An intrachain disulfide couples Cys-275 to Cys-336.

The protein belongs to the interleukin-1 receptor family. In terms of assembly, interacts with host IFNA1.

Its subcellular location is the secreted. Counteracts the antiviral effects of host IFN-alpha/beta and key IFN-inducible proteins involved in viral RNA degradation suxh as host OAS1. Acts as a soluble IFN-alpha receptor and thus inhibits the interaction between host IFN-alpha and its receptor. In Homo sapiens (Human), this protein is Soluble interferon alpha/beta receptor OPG204 (OPG204).